Here is a 97-residue protein sequence, read N- to C-terminus: Mapk-regulated corepressor-interacting protein 1 (97 aa).

The disordered stretch occupies residues 1-30 (MTSSPVSRVVYNGKRNSSHRSPPNSSEIFT). Residue Ser-21 is modified to Phosphoserine. Position 30 is a phosphothreonine (Thr-30). Residue Tyr-41 is modified to Phosphotyrosine. The tract at residues 77–97 (TFRPIDLSDLKRRNTQDAKKS) is disordered. Positions 80-84 (PIDLS) match the PXDLS motif motif. Residues 82–97 (DLSDLKRRNTQDAKKS) show a composition bias toward basic and acidic residues.

This sequence belongs to the MCRIP family. As to quaternary structure, interacts (unphosphorylated form, via the PXDLS motif) with CTBP1, competitively inhibiting CTBP-ZEB1 interaction. Interacts with CTBP2. Interacts with MCRIP2. Interacts with DDX6. In terms of processing, phosphorylation by MAPK3/1 (ERK1/2) regulates MCRIP1 binding to CTBP(s).

The protein localises to the nucleus. It localises to the cytoplasm. Its subcellular location is the stress granule. In terms of biological role, the phosphorylation status of MCRIP1 functions as a molecular switch to regulate epithelial-mesenchymal transition. Unphosphorylated MCRIP1 binds to and inhibits the transcriptional corepressor CTBP(s). When phosphorylated by MAPK/ERK, MCRIP1 releases CTBP(s) resulting in transcriptional silencing of the E-cadherin gene and induction of epithelial-mesenchymal transition. The chain is Mapk-regulated corepressor-interacting protein 1 (MCRIP1) from Bos taurus (Bovine).